The sequence spans 175 residues: Ribosome-binding factor A (175 aa).

A disordered region spans residues 131-175; it reads KPAGEADPYRDRGSVDEPSDAGGLVIRTSDGLEAENTGDDYQAED. Positions 162-175 are enriched in acidic residues; the sequence is LEAENTGDDYQAED.

The protein belongs to the RbfA family. Monomer. Binds 30S ribosomal subunits, but not 50S ribosomal subunits or 70S ribosomes.

The protein localises to the cytoplasm. Its function is as follows. One of several proteins that assist in the late maturation steps of the functional core of the 30S ribosomal subunit. Associates with free 30S ribosomal subunits (but not with 30S subunits that are part of 70S ribosomes or polysomes). Required for efficient processing of 16S rRNA. May interact with the 5'-terminal helix region of 16S rRNA. The chain is Ribosome-binding factor A from Mycobacterium ulcerans (strain Agy99).